Consider the following 462-residue polypeptide: tRNA modification GTPase MnmE (462 aa).

Residues R23, E88, and R127 each contribute to the (6S)-5-formyl-5,6,7,8-tetrahydrofolate site. One can recognise a TrmE-type G domain in the interval 224 to 383 (GLATVIIGRP…LEKAIADLFF (160 aa)). N234 contacts K(+). GTP-binding positions include 234–239 (NVGKSS), 253–259 (TDIPGTT), and 278–281 (DTAG). Position 238 (S238) interacts with Mg(2+). K(+)-binding residues include T253, I255, and T258. T259 lines the Mg(2+) pocket. K462 contacts (6S)-5-formyl-5,6,7,8-tetrahydrofolate.

Belongs to the TRAFAC class TrmE-Era-EngA-EngB-Septin-like GTPase superfamily. TrmE GTPase family. In terms of assembly, homodimer. Heterotetramer of two MnmE and two MnmG subunits. Requires K(+) as cofactor.

Its subcellular location is the cytoplasm. Exhibits a very high intrinsic GTPase hydrolysis rate. Involved in the addition of a carboxymethylaminomethyl (cmnm) group at the wobble position (U34) of certain tRNAs, forming tRNA-cmnm(5)s(2)U34. This is tRNA modification GTPase MnmE from Geobacillus thermodenitrificans (strain NG80-2).